Here is a 92-residue protein sequence, read N- to C-terminus: Alpha-conotoxin VxXXA (92 aa).

Residues 1–24 (MPKLEMMLLVLLIFPLSYFIAAGG) form the signal peptide. The propeptide occupies 25–45 (QVVQVDRRGDGLAGYLQRGDR). 4-hydroxyproline; partial is present on residues Pro55, Pro70, and Pro74. 4 disulfides stabilise this stretch: Cys63/Cys72, Cys68/Cys80, Cys73/Cys90, and Cys78/Cys92.

It belongs to the conotoxin D superfamily. In terms of assembly, homodimer or pseudo-homodimer. Three dimers exist: homodimer of VxXXA, pseudo-homodimer of both VxXXA and [hydroxyPro-74]VxXXA and homodimer of [hydroxyPro-74]VxXXA. These three components exist in a 1:2:1 ratio. In terms of processing, vxXXA stands for the form with the Pro-55 hydroxylated. A second major form has both Pro-55 and Pro-74 hydroxylated. The two major forms VxXXA and [hydroxyPro-74]VxXXA exist in a 1:1 ratio. Post-translationally, minor forms are [hydroxyPro-70,hydroxyPro-74]VxXXA and [Pro-55]VxXXA. Expressed by the venom duct.

The protein resides in the secreted. Functionally, alpha-conotoxins act on postsynaptic membranes, they bind to the nicotinic acetylcholine receptors (nAChR) and thus inhibit them. Through its two C-terminal domains, this homodimeric protein would bind to two nAChR allosteric sites, located outside the nAChR C-loop of the principal binding face and at the adjacent binding interface in a clockwise direction. This toxin specifically blocks mammalian neuronal nAChR of the alpha-7/CHRNA7, alpha-3-beta-2/CHRNA3-CHRNB2 (IC(50)=370 nM) and alpha-4-beta-2/CHRNA4-CHRNB2 subtypes. VxXXB inhibits alpha-7/CHRNA7 and alpha-3-beta-2/CHRNA3-CHRNB2 nAChR subtypes with the highest efficiency, followed by VxXXA and VxXXC. VxXXB and VxXXC inhibit the alpha-4-beta-2/CHRNA4-CHRNB2 nAChR subtype more efficiently than VxXXA. This is Alpha-conotoxin VxXXA from Conus vexillum (Flag cone).